The following is a 399-amino-acid chain: tRNA-specific 2-thiouridylase MnmA (399 aa).

Residues 7-14 (AMSGGVDS) and methionine 33 each bind ATP. Cysteine 128 acts as the Nucleophile in catalysis. Cysteines 128 and 224 form a disulfide. Glycine 152 contacts ATP. Positions 174–176 (KDQ) are interaction with tRNA. Cysteine 224 acts as the Cysteine persulfide intermediate in catalysis. An interaction with tRNA region spans residues 333-334 (RY).

It belongs to the MnmA/TRMU family.

It localises to the cytoplasm. It carries out the reaction S-sulfanyl-L-cysteinyl-[protein] + uridine(34) in tRNA + AH2 + ATP = 2-thiouridine(34) in tRNA + L-cysteinyl-[protein] + A + AMP + diphosphate + H(+). In terms of biological role, catalyzes the 2-thiolation of uridine at the wobble position (U34) of tRNA, leading to the formation of s(2)U34. This Rhodopirellula baltica (strain DSM 10527 / NCIMB 13988 / SH1) protein is tRNA-specific 2-thiouridylase MnmA.